The sequence spans 470 residues: Amino-acid permease RocC (470 aa).

The next 12 helical transmembrane spans lie at 18 to 38, 44 to 64, 90 to 110, 119 to 139, 159 to 179, 196 to 216, 243 to 263, 281 to 301, 338 to 358, 360 to 380, 409 to 429, and 433 to 453; these read FMIA…GFTI, LGAI…MLCL, GFMI…LELT, WLPS…IFLI, VAAI…LIDF, GLFP…NFSF, VIWR…AILP, IGIP…ILSV, ALLI…MAAE, VYLW…MSIC, LVPI…IFIP, and IGLY…HLSI.

Belongs to the amino acid-polyamine-organocation (APC) superfamily.

The protein resides in the cell membrane. Putative transport protein involved in arginine degradative pathway. Probably transports arginine or ornithine. This is Amino-acid permease RocC (rocC) from Bacillus subtilis (strain 168).